We begin with the raw amino-acid sequence, 510 residues long: NAD(P)H-quinone oxidoreductase subunit 2 B, chloroplastic (510 aa).

Helical transmembrane passes span 31-51 (FIFPECILIFGLILLLMIDLT), 59-79 (WFYFISSTSLVISITALLFRW), 99-119 (IFQFLILLCSTLCIPLSVEYI), 124-144 (MAITEFLLFVLTATLGGMFLC), 149-169 (LITIFVALECFSLCSYLLSGY), 184-204 (LLMGGASSSILVYGFSWLYGL), 229-249 (ISIALIFITVGLGFKLSLAPF), 261-281 (PTPVVAFLSVTSKVAALALAT), 295-315 (WHLLLEILAILSMILGNLLAI), 323-343 (MLAYSSIGQIGYVIIGIIVGD), 354-374 (YMLFYISMNLGTFACIVLFGL), 395-415 (ALSLALCLLSLGGLPPLAGFF), 418-438 (LYLFWCGWQAGLYFLVSIGLL), and 484-504 (MTVCVIASTILGISMNPILAI).

Belongs to the complex I subunit 2 family. NDH is composed of at least 16 different subunits, 5 of which are encoded in the nucleus.

The protein localises to the plastid. The protein resides in the chloroplast thylakoid membrane. The catalysed reaction is a plastoquinone + NADH + (n+1) H(+)(in) = a plastoquinol + NAD(+) + n H(+)(out). It catalyses the reaction a plastoquinone + NADPH + (n+1) H(+)(in) = a plastoquinol + NADP(+) + n H(+)(out). Functionally, NDH shuttles electrons from NAD(P)H:plastoquinone, via FMN and iron-sulfur (Fe-S) centers, to quinones in the photosynthetic chain and possibly in a chloroplast respiratory chain. The immediate electron acceptor for the enzyme in this species is believed to be plastoquinone. Couples the redox reaction to proton translocation, and thus conserves the redox energy in a proton gradient. This Hordeum vulgare (Barley) protein is NAD(P)H-quinone oxidoreductase subunit 2 B, chloroplastic.